A 946-amino-acid chain; its full sequence is Calcium-transporting ATPase type 2C member 2 (946 aa).

Residues 1 to 106 are Cytoplasmic-facing; it reads MVEGRVSEFL…DNSEPVWKKY (106 aa). The segment at 71–95 is interaction with ORAI1; it reads VDLHTGLSEFSVTQRRLAHGWNEFV. Residues 107–127 traverse the membrane as a helical segment; sequence LDQFKNPLILLLLGSALVSVL. Residues 128–129 are Extracellular-facing; that stretch reads TK. Residues 130-150 form a helical membrane-spanning segment; sequence EYEDAVSIATAVLVVVTVAFI. Residues 151–231 are Cytoplasmic-facing; sequence QEYRSEKSLE…EAEPCSKTDS (81 aa). Residues 232-252 form a helical membrane-spanning segment; it reads PLTGGGDLTTLSNIVFMGTLV. Topologically, residues 253-293 are extracellular; sequence QYGRGQGVVIGTGESSQFGEVFKMMQAEETPKTPLQKSMDR. Threonine 264 bears the Phosphothreonine mark. 2 positions are modified to phosphoserine: serine 267 and serine 268. The chain crosses the membrane as a helical span at residues 294–314; it reads LGKQLTLFSFGIIGLIMLIGW. The Cytoplasmic portion of the chain corresponds to 315–331; it reads SQGKQLLSMFTIGVSLA. Ca(2+)-binding residues include valine 332, alanine 333, isoleucine 335, and glutamate 337. A helical membrane pass occupies residues 332–352; that stretch reads VAAIPEGLPIVVMVTLVLGVL. Residues 353 to 750 are Extracellular-facing; that stretch reads RMAKKRVIVK…ISALSLITLS (398 aa). Catalysis depends on aspartate 379, which acts as the 4-aspartylphosphate intermediate. 2 residues coordinate Mg(2+): aspartate 674 and aspartate 678. Residues 751–771 form a helical membrane-spanning segment; the sequence is TVFNLPSPLNAMQILWINIIM. Residues asparagine 768 and aspartate 772 each contribute to the Ca(2+) site. Over 772–804 the chain is Cytoplasmic; sequence DGPPAQSLGVEPVDKDAFRQPPRSVRDTILSRA. The chain crosses the membrane as a helical span at residues 805-825; sequence LILKILMSAAIIISGTLFIFW. The Extracellular portion of the chain corresponds to 826-837; it reads KEMPEDRASTPR. A helical membrane pass occupies residues 838-855; that stretch reads TTTMTFTCFVFFDLFNAL. At 856 to 874 the chain is on the cytoplasmic side; the sequence is TCRSQTKLIFEIGFLRNHM. The chain crosses the membrane as a helical span at residues 875–895; the sequence is FLYSVLGSILGQLAVIYIPPL. Topologically, residues 896-905 are extracellular; that stretch reads QRVFQTENLG. The helical transmembrane segment at 906 to 926 threads the bilayer; the sequence is ALDLLFLTGLASSVFILSELL. Residues 927–946 are Cytoplasmic-facing; the sequence is KLCEKYCCSPKRVQMHPEDV.

The protein belongs to the cation transport ATPase (P-type) (TC 3.A.3) family. Type IIA subfamily. In terms of assembly, interacts (via N-terminus) with ORAI1 (via N- and C-termini); this interaction regulates Ca(2+) influx at the plasma membrane. As to expression, highly expressed in the gastrointestinal and respiratory tracts, prostate, thyroid, salivary, and mammary glands. Expressed in colon epithelial cells (at protein level). Expressed in brain and testis (at protein level).

Its subcellular location is the golgi apparatus. The protein localises to the trans-Golgi network membrane. It is found in the cell membrane. It localises to the basolateral cell membrane. The catalysed reaction is Ca(2+)(in) + ATP + H2O = Ca(2+)(out) + ADP + phosphate + H(+). The enzyme catalyses Mn(2+)(in) + ATP + H2O = Mn(2+)(out) + ADP + phosphate + H(+). ATP-driven pump that supplies the Golgi apparatus with Ca(2+) and Mn(2+) ions, both essential cofactors for processing and trafficking of newly synthesized proteins in the secretory pathway. Within a catalytic cycle, acquires Ca(2+) or Mn(2+) ions on the cytoplasmic side of the membrane and delivers them to the lumenal side. The transfer of ions across the membrane is coupled to ATP hydrolysis and is associated with a transient phosphorylation that shifts the pump conformation from inward-facing to outward-facing state. Induces Ca(2+) influx independently of its ATP-driven pump function. At the basolateral membrane of mammary epithelial cells, interacts with Ca(2+) channel ORAI1 and mediates Ca(2+) entry independently of the Ca(2+) content of endoplasmic reticulum or Golgi stores. May facilitate transepithelial transport of large quantities of Ca(2+) for milk secretion via activation of Ca(2+) influx channels at the plasma membrane and active Ca(2+) transport at the Golgi apparatus. The chain is Calcium-transporting ATPase type 2C member 2 from Homo sapiens (Human).